A 336-amino-acid polypeptide reads, in one-letter code: Phospho-N-acetylmuramoyl-pentapeptide-transferase (336 aa).

Transmembrane regions (helical) follow at residues L3 to I23, G53 to I73, S78 to L98, L118 to I138, V143 to V163, G174 to A194, F200 to N220, V226 to A246, W251 to V271, and A316 to F336.

This sequence belongs to the glycosyltransferase 4 family. MraY subfamily. Requires Mg(2+) as cofactor.

Its subcellular location is the cell membrane. It catalyses the reaction UDP-N-acetyl-alpha-D-muramoyl-L-alanyl-gamma-D-glutamyl-L-lysyl-D-alanyl-D-alanine + di-trans,octa-cis-undecaprenyl phosphate = Mur2Ac(oyl-L-Ala-gamma-D-Glu-L-Lys-D-Ala-D-Ala)-di-trans,octa-cis-undecaprenyl diphosphate + UMP. The protein operates within cell wall biogenesis; peptidoglycan biosynthesis. Catalyzes the initial step of the lipid cycle reactions in the biosynthesis of the cell wall peptidoglycan: transfers peptidoglycan precursor phospho-MurNAc-pentapeptide from UDP-MurNAc-pentapeptide onto the lipid carrier undecaprenyl phosphate, yielding undecaprenyl-pyrophosphoryl-MurNAc-pentapeptide, known as lipid I. The chain is Phospho-N-acetylmuramoyl-pentapeptide-transferase from Streptococcus pyogenes serotype M5 (strain Manfredo).